Reading from the N-terminus, the 311-residue chain is tRNA-cytidine(32) 2-sulfurtransferase (311 aa).

Residues 47–52 (SGGKDS) carry the PP-loop motif motif. C122, C125, and C213 together coordinate [4Fe-4S] cluster.

The protein belongs to the TtcA family. As to quaternary structure, homodimer. Mg(2+) is required as a cofactor. Requires [4Fe-4S] cluster as cofactor.

Its subcellular location is the cytoplasm. The catalysed reaction is cytidine(32) in tRNA + S-sulfanyl-L-cysteinyl-[cysteine desulfurase] + AH2 + ATP = 2-thiocytidine(32) in tRNA + L-cysteinyl-[cysteine desulfurase] + A + AMP + diphosphate + H(+). Its pathway is tRNA modification. In terms of biological role, catalyzes the ATP-dependent 2-thiolation of cytidine in position 32 of tRNA, to form 2-thiocytidine (s(2)C32). The sulfur atoms are provided by the cysteine/cysteine desulfurase (IscS) system. The polypeptide is tRNA-cytidine(32) 2-sulfurtransferase (Escherichia coli O7:K1 (strain IAI39 / ExPEC)).